The sequence spans 423 residues: Divalent metal cation transporter MntH (423 aa).

Transmembrane regions (helical) follow at residues 31–51 (LMML…GNFA), 58–78 (SSFG…AMLI), 116–136 (IIAI…FQLV), 137–157 (FGIS…MILI), 168–188 (VVIG…LFFA), 213–233 (AAGI…SALF), 254–274 (IAMV…AAVF), 302–322 (VLFG…GTMA), 342–362 (FITM…TDIL), 363–383 (VMSQ…LLIF), and 401–421 (YAGV…MVTL).

The protein belongs to the NRAMP family.

It localises to the cell inner membrane. In terms of biological role, h(+)-stimulated, divalent metal cation uptake system. This Vibrio campbellii (strain ATCC BAA-1116) protein is Divalent metal cation transporter MntH.